Reading from the N-terminus, the 729-residue chain is Fatty acid oxidation complex subunit alpha (729 aa).

The tract at residues 1 to 189 (MLYKGDTLYL…KIGLVDGVVK (189 aa)) is enoyl-CoA hydratase/isomerase. Asp-296 lines the substrate pocket. The 3-hydroxyacyl-CoA dehydrogenase stretch occupies residues 311–729 (ETPKQAAVLG…ARPVGSLKTA (419 aa)). Residues Met-324, Asp-343, 400-402 (VVE), Lys-407, and Ser-429 each bind NAD(+). His-450 (for 3-hydroxyacyl-CoA dehydrogenase activity) is an active-site residue. NAD(+) is bound at residue Asn-453. Asn-500 and Tyr-660 together coordinate substrate. Residues 708–729 (RHNEPYYPPVEPARPVGSLKTA) form a disordered region.

The protein in the N-terminal section; belongs to the enoyl-CoA hydratase/isomerase family. This sequence in the C-terminal section; belongs to the 3-hydroxyacyl-CoA dehydrogenase family. Heterotetramer of two alpha chains (FadB) and two beta chains (FadA).

The enzyme catalyses a (3S)-3-hydroxyacyl-CoA + NAD(+) = a 3-oxoacyl-CoA + NADH + H(+). The catalysed reaction is a (3S)-3-hydroxyacyl-CoA = a (2E)-enoyl-CoA + H2O. It carries out the reaction a 4-saturated-(3S)-3-hydroxyacyl-CoA = a (3E)-enoyl-CoA + H2O. It catalyses the reaction (3S)-3-hydroxybutanoyl-CoA = (3R)-3-hydroxybutanoyl-CoA. The enzyme catalyses a (3Z)-enoyl-CoA = a 4-saturated (2E)-enoyl-CoA. The catalysed reaction is a (3E)-enoyl-CoA = a 4-saturated (2E)-enoyl-CoA. Its pathway is lipid metabolism; fatty acid beta-oxidation. Its function is as follows. Involved in the aerobic and anaerobic degradation of long-chain fatty acids via beta-oxidation cycle. Catalyzes the formation of 3-oxoacyl-CoA from enoyl-CoA via L-3-hydroxyacyl-CoA. It can also use D-3-hydroxyacyl-CoA and cis-3-enoyl-CoA as substrate. The protein is Fatty acid oxidation complex subunit alpha of Salmonella schwarzengrund (strain CVM19633).